The sequence spans 242 residues: 4-hydroxy-tetrahydrodipicolinate reductase (242 aa).

NAD(+)-binding positions include 79-81 (ATT) and 103-106 (SANM). Catalysis depends on H135, which acts as the Proton donor/acceptor. Residue H136 coordinates (S)-2,3,4,5-tetrahydrodipicolinate. The active-site Proton donor is K139. Position 145 to 146 (145 to 146 (GT)) interacts with (S)-2,3,4,5-tetrahydrodipicolinate.

The protein belongs to the DapB family.

It is found in the cytoplasm. It carries out the reaction (S)-2,3,4,5-tetrahydrodipicolinate + NAD(+) + H2O = (2S,4S)-4-hydroxy-2,3,4,5-tetrahydrodipicolinate + NADH + H(+). The catalysed reaction is (S)-2,3,4,5-tetrahydrodipicolinate + NADP(+) + H2O = (2S,4S)-4-hydroxy-2,3,4,5-tetrahydrodipicolinate + NADPH + H(+). The protein operates within amino-acid biosynthesis; L-lysine biosynthesis via DAP pathway; (S)-tetrahydrodipicolinate from L-aspartate: step 4/4. Functionally, catalyzes the conversion of 4-hydroxy-tetrahydrodipicolinate (HTPA) to tetrahydrodipicolinate. The chain is 4-hydroxy-tetrahydrodipicolinate reductase from Staphylococcus carnosus (strain TM300).